A 90-amino-acid polypeptide reads, in one-letter code: Probable Fe(2+)-trafficking protein (90 aa).

This sequence belongs to the Fe(2+)-trafficking protein family.

In terms of biological role, could be a mediator in iron transactions between iron acquisition and iron-requiring processes, such as synthesis and/or repair of Fe-S clusters in biosynthetic enzymes. The polypeptide is Probable Fe(2+)-trafficking protein (Azoarcus sp. (strain BH72)).